Consider the following 631-residue polypeptide: Eukaryotic translation initiation factor 3 subunit L (631 aa).

Positions 335-526 constitute a PCI domain; sequence TFVSVLIFFI…AETTLLDGER (192 aa). The segment at 571–631 is disordered; the sequence is KSAPLPVRKP…PKSRQARIAA (61 aa). Positions 580–612 are enriched in low complexity; that stretch reads PASSSAPAPATTAAPISKSGESAAPAPAEAPAA.

It belongs to the eIF-3 subunit L family. Component of the eukaryotic translation initiation factor 3 (eIF-3) complex.

The protein localises to the cytoplasm. Functionally, component of the eukaryotic translation initiation factor 3 (eIF-3) complex, which is involved in protein synthesis of a specialized repertoire of mRNAs and, together with other initiation factors, stimulates binding of mRNA and methionyl-tRNAi to the 40S ribosome. The eIF-3 complex specifically targets and initiates translation of a subset of mRNAs involved in cell proliferation. The protein is Eukaryotic translation initiation factor 3 subunit L of Cryptococcus neoformans var. neoformans serotype D (strain B-3501A) (Filobasidiella neoformans).